The primary structure comprises 184 residues: Isopentenyl-diphosphate Delta-isomerase (184 aa).

Mn(2+) contacts are provided by His25 and His32. One can recognise a Nudix hydrolase domain in the interval 30–164 (PLHLAFSCWL…PWAFSPWMVL (135 aa)). The active site involves Cys67. Position 69 (His69) interacts with Mn(2+). Glu87 lines the Mg(2+) pocket. The Mn(2+) site is built by Glu114 and Glu116. Residue Glu116 is part of the active site.

This sequence belongs to the IPP isomerase type 1 family. In terms of assembly, homodimer. The cofactor is Mg(2+). Mn(2+) serves as cofactor.

It is found in the cytoplasm. It catalyses the reaction isopentenyl diphosphate = dimethylallyl diphosphate. It functions in the pathway isoprenoid biosynthesis; dimethylallyl diphosphate biosynthesis; dimethylallyl diphosphate from isopentenyl diphosphate: step 1/1. Functionally, catalyzes the 1,3-allylic rearrangement of the homoallylic substrate isopentenyl (IPP) to its highly electrophilic allylic isomer, dimethylallyl diphosphate (DMAPP). The chain is Isopentenyl-diphosphate Delta-isomerase from Klebsiella pneumoniae (strain 342).